The chain runs to 329 residues: Glycerol-3-phosphate dehydrogenase [NAD(P)+] (329 aa).

Residues Trp15, His35, and Lys107 each contribute to the NADPH site. Lys107, Gly135, and Ser137 together coordinate sn-glycerol 3-phosphate. Ala139 is an NADPH binding site. Residues Lys190, Asp243, Ser253, Arg254, and Asn255 each coordinate sn-glycerol 3-phosphate. Residue Lys190 is the Proton acceptor of the active site. Arg254 lines the NADPH pocket. NADPH contacts are provided by Leu276 and Glu278.

This sequence belongs to the NAD-dependent glycerol-3-phosphate dehydrogenase family.

Its subcellular location is the cytoplasm. The catalysed reaction is sn-glycerol 3-phosphate + NAD(+) = dihydroxyacetone phosphate + NADH + H(+). It catalyses the reaction sn-glycerol 3-phosphate + NADP(+) = dihydroxyacetone phosphate + NADPH + H(+). The protein operates within membrane lipid metabolism; glycerophospholipid metabolism. Functionally, catalyzes the reduction of the glycolytic intermediate dihydroxyacetone phosphate (DHAP) to sn-glycerol 3-phosphate (G3P), the key precursor for phospholipid synthesis. The polypeptide is Glycerol-3-phosphate dehydrogenase [NAD(P)+] (Rhodopseudomonas palustris (strain BisB5)).